The sequence spans 529 residues: Peptide chain release factor 3 (529 aa).

One can recognise a tr-type G domain in the interval 11–280; it reads SKRRTFAIIS…GLTEWAPAPK (270 aa). GTP-binding positions include 20–27, 88–92, and 142–145; these read SHPDAGKT, DTPGH, and NKLD.

It belongs to the TRAFAC class translation factor GTPase superfamily. Classic translation factor GTPase family. PrfC subfamily.

It is found in the cytoplasm. Functionally, increases the formation of ribosomal termination complexes and stimulates activities of RF-1 and RF-2. It binds guanine nucleotides and has strong preference for UGA stop codons. It may interact directly with the ribosome. The stimulation of RF-1 and RF-2 is significantly reduced by GTP and GDP, but not by GMP. This chain is Peptide chain release factor 3, found in Vibrio campbellii (strain ATCC BAA-1116).